The chain runs to 261 residues: Bidirectional sugar transporter SWEET1b (261 aa).

The Extracellular portion of the chain corresponds to 1–6 (MEDLAK). The helical transmembrane segment at 7–27 (FLFGVSGNVIALFLFLSPVPT) threads the bilayer. The region spanning 7 to 95 (FLFGVSGNVI…VVFLVFASTH (89 aa)) is the MtN3/slv 1 domain. Residues 28-42 (FWRIIRRKSTEDFSG) are Cytoplasmic-facing. A helical transmembrane segment spans residues 43–63 (VPYNMTLINCLLSAWYGLPFV). Residues 64–71 (SPNNILVS) lie on the Extracellular side of the membrane. The helical transmembrane segment at 72–92 (TINGAGAVIETAYVVVFLVFA) threads the bilayer. Residues 93-101 (STHKTRLRT) are Cytoplasmic-facing. Residues 102–122 (LGLAAAVASVFAAVALVSLLA) traverse the membrane as a helical segment. At 123-129 (LHGQHRK) the chain is on the extracellular side. Residues 130–150 (LLCGVAATVCSICMYASPLSI) form a helical membrane-spanning segment. One can recognise a MtN3/slv 2 domain in the interval 133-215 (GVAATVCSIC…VLYAIYRNNK (83 aa)). Over 151–164 (MRLVIKTKSVEYMP) the chain is Cytoplasmic. Residues 165–185 (FLLSLAVFLCGTSWFIYGLLG) traverse the membrane as a helical segment. Over 186–189 (RDPF) the chain is Extracellular. Residues 190-210 (VTIPNGCGSFLGAVQLVLYAI) traverse the membrane as a helical segment. Residues 211–261 (YRNNKGAGGGSGGKQAGDDDVEMAEGRNNKVADGGAAEDDSTAGGKAGTEV) are Cytoplasmic-facing. The tract at residues 218 to 261 (GGGSGGKQAGDDDVEMAEGRNNKVADGGAAEDDSTAGGKAGTEV) is disordered.

The protein belongs to the SWEET sugar transporter family. Forms homodimers.

It is found in the cell membrane. It carries out the reaction D-glucose(out) = D-glucose(in). It catalyses the reaction D-galactose(in) = D-galactose(out). Functionally, mediates transport of sugars across the plasma membrane. Can transport glucose and galactose, but not fructose, mannose and sucrose. The chain is Bidirectional sugar transporter SWEET1b (SWEET1B) from Oryza sativa subsp. indica (Rice).